Consider the following 2541-residue polypeptide: Talin-1 (2541 aa).

An FERM domain is found at 86 to 403 (RPLKIRMLDG…GYIDIILKKK (318 aa)). A Phosphothreonine modification is found at T167. The segment at 280–435 (FQAHKNCGQM…PKKSTVLQQQ (156 aa)) is interaction with LAYN. Phosphoserine occurs at positions 405, 425, 446, 620, and 729. The tract at residues 482 to 655 (RGHMPPLTSA…QASGELLQQI (174 aa)) is helical bundle R1. Residues 656–786 (GESDTDPHFQ…ALNELLQHVK (131 aa)) are helical bundle R2. A helical bundle R3 region spans residues 787 to 911 (AHATGAGPAG…NAAAQNAIKK (125 aa)). Positions 913–1044 (LVQRLEHAAK…RTAAQKAQEA (132 aa)) are helical bundle R4. S1021 is modified (phosphoserine). The tract at residues 1046–1206 (GPLEMDSALS…NRCVSCLPGQ (161 aa)) is helical bundle R5. Residue Y1116 is modified to Phosphotyrosine. At T1142 the chain carries Phosphothreonine. S1201 and S1225 each carry phosphoserine. Residues 1207-1357 (RDVDNALRAV…QLITMCTQQA (151 aa)) form a helical bundle R6 region. T1263 is modified (phosphothreonine). S1323 and S1328 each carry phosphoserine. The segment at 1327–1948 (ASPNLKSQLA…CSPSDVYTKK (622 aa)) is interaction with SYNM. The tract at residues 1358 to 1453 (PGQKECDNAL…AYLVGVSDPN (96 aa)) is helical bundle R7A; Interaction with KANK1. Residues 1359–1659 (GQKECDNALR…SMRDKAPGQL (301 aa)) form an interaction with VCL and F-actin region. A helical bundle R8 region spans residues 1461 to 1580 (LVEPTQFARA…NLSAFASNPE (120 aa)). Position 1544 is an N6-acetyllysine (K1544). Residues 1581–1653 (FSSVPAQISP…IKKLITSMRD (73 aa)) form a helical bundle R7B; Interaction with KANK1 region. Residues 1655–1822 (APGQLECETA…TLNEAASAAG (168 aa)) are helical bundle R9. The tract at residues 1823 to 1973 (VVGGMVDSIT…VLAALQAGNR (151 aa)) is helical bundle R10. Phosphoserine is present on S1849. T1855 is subject to Phosphothreonine. At S1878 the chain carries Phosphoserine. Residues 1974–2140 (GTQACITAAS…TVKAVEDEAT (167 aa)) are helical bundle R11. K2031 is modified (N6-acetyllysine). Residue S2040 is modified to Phosphoserine. K2115 bears the N6-acetyllysine mark. Positions 2141–2294 (KGTRALEATT…QAAEAMKGTE (154 aa)) are helical bundle R12. In terms of domain architecture, I/LWEQ spans 2293-2533 (TEWVDPEDPT…QIRQQQYKFL (241 aa)). Positions 2300 to 2482 (DPTVIAENEL…AAQKAAAFED (183 aa)) are helical bundle R13.

In terms of assembly, part of a complex composed of THSD1, PTK2/FAK1, TLN1 and VCL. Interacts with THSD1; this promotes interaction with PTK2/FAK1 and VCL. Interacts with NRAP and LAYN. Interacts with SYNM. Interacts with ITGB1; the interaction is prevented by competitive binding of ITGB1BP1. Binds with high affinity to VCL and with low affinity to integrins. Interacts with APBB1IP; this inhibits VCL binding. Interacts with PTK2/FAK1. Interacts with PIP5K1C. Interacts with F-actin. Interacts with SVEP1. Interacts (via R7 domain) with KANK1 or KANK2 (via KN motif); this interaction likely initiates the assembly of cortical microtubule stabilization complexes (CMSCs) at the vicinity of focal adhesions.

It localises to the cell projection. It is found in the ruffle membrane. The protein resides in the cytoplasm. Its subcellular location is the cytoskeleton. The protein localises to the cell surface. It localises to the cell junction. It is found in the focal adhesion. In terms of biological role, high molecular weight cytoskeletal protein concentrated at regions of cell-matrix and cell-cell contacts. Involved in connections of major cytoskeletal structures to the plasma membrane. With KANK1 co-organize the assembly of cortical microtubule stabilizing complexes (CMSCs) positioned to control microtubule-actin crosstalk at focal adhesions (FAs) rims. This is Talin-1 (Tln1) from Mus musculus (Mouse).